The following is a 619-amino-acid chain: Dihydroxy-acid dehydratase (619 aa).

Asp81 provides a ligand contact to Mg(2+). Cys122 serves as a coordination point for [2Fe-2S] cluster. Mg(2+) is bound by residues Asp123 and Lys124. At Lys124 the chain carries N6-carboxylysine. Cys195 contacts [2Fe-2S] cluster. Glu494 contacts Mg(2+). Ser520 (proton acceptor) is an active-site residue.

It belongs to the IlvD/Edd family. As to quaternary structure, homodimer. [2Fe-2S] cluster serves as cofactor. The cofactor is Mg(2+).

The catalysed reaction is (2R)-2,3-dihydroxy-3-methylbutanoate = 3-methyl-2-oxobutanoate + H2O. It catalyses the reaction (2R,3R)-2,3-dihydroxy-3-methylpentanoate = (S)-3-methyl-2-oxopentanoate + H2O. It participates in amino-acid biosynthesis; L-isoleucine biosynthesis; L-isoleucine from 2-oxobutanoate: step 3/4. The protein operates within amino-acid biosynthesis; L-valine biosynthesis; L-valine from pyruvate: step 3/4. Its function is as follows. Functions in the biosynthesis of branched-chain amino acids. Catalyzes the dehydration of (2R,3R)-2,3-dihydroxy-3-methylpentanoate (2,3-dihydroxy-3-methylvalerate) into 2-oxo-3-methylpentanoate (2-oxo-3-methylvalerate) and of (2R)-2,3-dihydroxy-3-methylbutanoate (2,3-dihydroxyisovalerate) into 2-oxo-3-methylbutanoate (2-oxoisovalerate), the penultimate precursor to L-isoleucine and L-valine, respectively. The polypeptide is Dihydroxy-acid dehydratase (Shewanella putrefaciens (strain CN-32 / ATCC BAA-453)).